A 473-amino-acid polypeptide reads, in one-letter code: tRNA-2-methylthio-N(6)-dimethylallyladenosine synthase (473 aa).

The 118-residue stretch at 3-120 (MKLHVKTWGC…LPEMIKEVQE (118 aa)) folds into the MTTase N-terminal domain. [4Fe-4S] cluster contacts are provided by Cys12, Cys49, Cys83, Cys157, Cys161, and Cys164. The 233-residue stretch at 143 to 375 (KADGATAFVS…QDRIQQQSQG (233 aa)) folds into the Radical SAM core domain. The TRAM domain occupies 378–441 (RKMVGSVQRI…TNSIRGKFIR (64 aa)).

It belongs to the methylthiotransferase family. MiaB subfamily. In terms of assembly, monomer. [4Fe-4S] cluster serves as cofactor.

The protein resides in the cytoplasm. The catalysed reaction is N(6)-dimethylallyladenosine(37) in tRNA + (sulfur carrier)-SH + AH2 + 2 S-adenosyl-L-methionine = 2-methylsulfanyl-N(6)-dimethylallyladenosine(37) in tRNA + (sulfur carrier)-H + 5'-deoxyadenosine + L-methionine + A + S-adenosyl-L-homocysteine + 2 H(+). Functionally, catalyzes the methylthiolation of N6-(dimethylallyl)adenosine (i(6)A), leading to the formation of 2-methylthio-N6-(dimethylallyl)adenosine (ms(2)i(6)A) at position 37 in tRNAs that read codons beginning with uridine. This Psychromonas ingrahamii (strain DSM 17664 / CCUG 51855 / 37) protein is tRNA-2-methylthio-N(6)-dimethylallyladenosine synthase.